A 354-amino-acid chain; its full sequence is Uroporphyrinogen decarboxylase (354 aa).

Substrate is bound by residues Arg-27–Arg-31, Asp-77, Tyr-154, Ser-209, and His-327.

Belongs to the uroporphyrinogen decarboxylase family. As to quaternary structure, homodimer.

The protein resides in the cytoplasm. It catalyses the reaction uroporphyrinogen III + 4 H(+) = coproporphyrinogen III + 4 CO2. It participates in porphyrin-containing compound metabolism; protoporphyrin-IX biosynthesis; coproporphyrinogen-III from 5-aminolevulinate: step 4/4. Catalyzes the decarboxylation of four acetate groups of uroporphyrinogen-III to yield coproporphyrinogen-III. In Shewanella putrefaciens (strain CN-32 / ATCC BAA-453), this protein is Uroporphyrinogen decarboxylase.